The primary structure comprises 423 residues: AP-1 complex subunit mu-1 (423 aa).

At Ser-2 the chain carries N-acetylserine. Phosphothreonine occurs at positions 152, 154, and 223. Residues 168 to 421 form the MHD domain; it reads KNEVFLDVIE…ITQNGDYQLR (254 aa).

This sequence belongs to the adaptor complexes medium subunit family. As to quaternary structure, adaptor protein complex 1 (AP-1) is a heterotetramer composed of two large adaptins (gamma-type subunit AP1G1 and beta-type subunit AP1B1), a medium adaptin (mu-type subunit AP1M1 or AP1M2) and a small adaptin (sigma-type subunit AP1S1 or AP1S2 or AP1S3). Interacts with MARCHF11. In terms of processing, phosphorylation of membrane-bound AP1M1/AP1M2 increases its affinity for sorting signals.

The protein resides in the cytoplasmic vesicle. It is found in the clathrin-coated vesicle membrane. It localises to the golgi apparatus. Functionally, subunit of clathrin-associated adaptor protein complex 1 that plays a role in protein sorting in the trans-Golgi network (TGN) and endosomes. The AP complexes mediate the recruitment of clathrin to membranes and the recognition of sorting signals within the cytosolic tails of transmembrane cargo molecules. This is AP-1 complex subunit mu-1 from Rattus norvegicus (Rat).